Here is a 360-residue protein sequence, read N- to C-terminus: Probable dual-specificity RNA methyltransferase RlmN (360 aa).

The active-site Proton acceptor is glutamate 91. In terms of domain architecture, Radical SAM core spans 97–335 (QHYGQSVCVT…CVVRQEHGTD (239 aa)). A disulfide bond links cysteine 104 and cysteine 340. [4Fe-4S] cluster-binding residues include cysteine 111, cysteine 115, and cysteine 118. S-adenosyl-L-methionine is bound by residues 163–164 (GE), serine 195, 218–220 (SLH), and asparagine 296. The S-methylcysteine intermediate role is filled by cysteine 340.

The protein belongs to the radical SAM superfamily. RlmN family. The cofactor is [4Fe-4S] cluster.

Its subcellular location is the cytoplasm. The catalysed reaction is adenosine(2503) in 23S rRNA + 2 reduced [2Fe-2S]-[ferredoxin] + 2 S-adenosyl-L-methionine = 2-methyladenosine(2503) in 23S rRNA + 5'-deoxyadenosine + L-methionine + 2 oxidized [2Fe-2S]-[ferredoxin] + S-adenosyl-L-homocysteine. It carries out the reaction adenosine(37) in tRNA + 2 reduced [2Fe-2S]-[ferredoxin] + 2 S-adenosyl-L-methionine = 2-methyladenosine(37) in tRNA + 5'-deoxyadenosine + L-methionine + 2 oxidized [2Fe-2S]-[ferredoxin] + S-adenosyl-L-homocysteine. Its function is as follows. Specifically methylates position 2 of adenine 2503 in 23S rRNA and position 2 of adenine 37 in tRNAs. This Streptococcus equi subsp. zooepidemicus (strain H70) protein is Probable dual-specificity RNA methyltransferase RlmN.